We begin with the raw amino-acid sequence, 741 residues long: Protein O-mannosyl-transferase TMTC4 (741 aa).

Residues 1–10 are Cytoplasmic-facing; the sequence is MVELDADLDH. Residues 11-31 traverse the membrane as a helical segment; sequence IVPSVLPPFWAKLVVGFVSLL. Residues 32 to 110 lie on the Extracellular side of the membrane; the sequence is CFARSYDGDF…FHPVGFHVVN (79 aa). An N-linked (GlcNAc...) asparagine glycan is attached at N77. The helical transmembrane segment at 111-131 threads the bilayer; the sequence is ILLHGSISILMLDVFSVLFGG. Over 132 to 146 the chain is Cytoplasmic; that stretch reads LQYTGKGQRVHLAPR. The next 2 helical transmembrane spans lie at 147 to 166 and 167 to 185; these read ASLLATLLFAVHPVHTECVA and GVVGRADLLCALFFLLSFL. Topologically, residues 186–198 are cytoplasmic; sequence GYCQAFKETGNKE. The helical transmembrane segment at 199–219 threads the bilayer; it reads GTHSSTFWVLLSIFLGAVAML. The Extracellular segment spans residues 220 to 224; that stretch reads CKEQG. The chain crosses the membrane as a helical span at residues 225 to 245; sequence ITVLGLNAVFDILVIGKLDIL. Over 246–265 the chain is Cytoplasmic; sequence AAVRKVLHKDKSQENAGMFK. A helical transmembrane segment spans residues 266–286; that stretch reads NGGLLFRIALLTIGGTSMLYI. At 287–354 the chain is on the extracellular side; the sequence is RWKIMGTGPP…PLIKSVGDWR (68 aa). The helical transmembrane segment at 355–375 threads the bilayer; that stretch reads VIALAALWLCLIGLIFQALCS. At 376–382 the chain is on the cytoplasmic side; sequence EDSCKRR. Residues 383-403 traverse the membrane as a helical segment; that stretch reads ILTLGLGFLVIPFLPASNLFF. Residues 404-412 lie on the Extracellular side of the membrane; that stretch reads RVGFVVAER. A helical transmembrane segment spans residues 413–433; it reads VLYLPSAGYCVLLTFGFGALS. Over 434–441 the chain is Cytoplasmic; the sequence is RHTKKKKP. The helical transmembrane segment at 442-462 threads the bilayer; that stretch reads VAAIILGILLINALRCVIRSG. Residues 463 to 741 are Extracellular-facing; the sequence is EWRSEEQLFR…KLEQTQKKDV (279 aa). 7 TPR repeats span residues 482–515, 516–549, 550–583, 584–617, 618–651, 652–685, and 686–719; these read AKVHYNIGKNLADQGNQTAAIKYYREAVRLNPKY, VHAMNNLGNILKERNELQEAEELLSLAVQIQPDF, AAAWMNLGIVQNSLKRFEEAEQSYRTAIKHRRKY, PDCYYNLGRLYADLNRHVDALNAWRNATVLKPEH, SLAWNNMIILLDNTGNLAQAEAVGREALQLIPND, HSLMFSLANVLGKSQKYKESEALFLKAIKANPNV, and ASYHGNLAVLYHRWGHLDSAKKHYEISLQLDPVA. Residue N497 is glycosylated (N-linked (GlcNAc...) asparagine). The N-linked (GlcNAc...) asparagine glycan is linked to N609. N725 carries an N-linked (GlcNAc...) asparagine glycan.

This sequence belongs to the TMTC family.

The protein resides in the membrane. It localises to the endoplasmic reticulum. It carries out the reaction a di-trans,poly-cis-dolichyl beta-D-mannosyl phosphate + L-seryl-[protein] = 3-O-(alpha-D-mannosyl)-L-seryl-[protein] + a di-trans,poly-cis-dolichyl phosphate + H(+). The catalysed reaction is a di-trans,poly-cis-dolichyl beta-D-mannosyl phosphate + L-threonyl-[protein] = 3-O-(alpha-D-mannosyl)-L-threonyl-[protein] + a di-trans,poly-cis-dolichyl phosphate + H(+). The protein operates within protein modification; protein glycosylation. Transfers mannosyl residues to the hydroxyl group of serine or threonine residues. The 4 members of the TMTC family are O-mannosyl-transferases dedicated primarily to the cadherin superfamily, each member seems to have a distinct role in decorating the cadherin domains with O-linked mannose glycans at specific regions. Also acts as O-mannosyl-transferase on other proteins such as PDIA3. The polypeptide is Protein O-mannosyl-transferase TMTC4 (Mus musculus (Mouse)).